Here is a 626-residue protein sequence, read N- to C-terminus: Glutamine--fructose-6-phosphate aminotransferase [isomerizing] (626 aa).

Cysteine 2 serves as the catalytic Nucleophile; for GATase activity. A Glutamine amidotransferase type-2 domain is found at 2 to 222 (CGIVGYIGPQ…NGELARLTPT (221 aa)). SIS domains lie at 293–441 (LPPS…QRQS) and 471–616 (YIEA…VDQP). Lysine 621 serves as the catalytic For Fru-6P isomerization activity.

As to quaternary structure, homodimer.

It localises to the cytoplasm. The enzyme catalyses D-fructose 6-phosphate + L-glutamine = D-glucosamine 6-phosphate + L-glutamate. Its function is as follows. Catalyzes the first step in hexosamine metabolism, converting fructose-6P into glucosamine-6P using glutamine as a nitrogen source. In Thermosynechococcus vestitus (strain NIES-2133 / IAM M-273 / BP-1), this protein is Glutamine--fructose-6-phosphate aminotransferase [isomerizing].